We begin with the raw amino-acid sequence, 415 residues long: MAKNNTNRHYSLRKLKKGTASVAVALSVIGAGLVVNTNEVSARVFPRGTVENPDKARELLNKYDVENSMLQANNDKLTTENKNLTDQNKELKAEENRLTTENKGLTKKLSEAEEEAANKEQESKETIGTLKKILDETVKDKIAREQKSKQDIGALKQELAKKDEGNKVSEASRKGLRRDLDASREAKKQVEKDLANLTAELDKVKEEKQISDASRKGLRRDLDASREAKKQVEKDLANLTAELDKVKEEKQISDASRQGLRRDLDASREAKKQVEKALEEANSKLAALEKLNKELEESKKLTEKEKAELQAKLEAEAKALKEQLAKQAEELAKLRAGKASDSQTPDAKPGNKVVPGKGQAPQAGTKPNQNKAPMKETKRQLPSTGETANPFFTAAALTVMATAGVAAVVKRKEEN.

The first 42 residues, 1 to 42 (MAKNNTNRHYSLRKLKKGTASVAVALSVIGAGLVVNTNEVSA), serve as a signal peptide directing secretion. Coiled-coil stretches lie at residues 54–133 (DKAR…LKKI) and 170–340 (EASR…GKAS). 3 tandem repeats follow at residues 69 to 75 (MLQANND), 76 to 82 (KLTTENK), and 83 to 89 (NLTDQNK). The tract at residues 69–103 (MLQANNDKLTTENKNLTDQNKELKAEENRLTTENK) is 5 X 7 AA approximate tandem repeats of [KMNR]-L-[TQ]-[TDA]-[ENQ]-N-[NDK]. Over residues 75 to 86 (DKLTTENKNLTD) the composition is skewed to polar residues. 4 disordered regions span residues 75 to 125 (DKLT…ESKE), 157 to 189 (QELA…AKKQ), 202 to 231 (DKVK…AKKQ), and 247 to 277 (KEEK…VEKA). Composition is skewed to basic and acidic residues over residues 87–100 (QNKE…RLTT), 108–125 (KLSE…ESKE), and 158–189 (ELAK…AKKQ). The stretch at 90-96 (ELKAEEN) is one 4; approximate repeat. Repeat 5 spans residues 97 to 103 (RLTTENK). C repeat units lie at residues 160-194 (AKKD…EKDL), 202-236 (DKVK…EKDL), and 244-278 (DKVK…EKAL). A binding to CD46 region spans residues 211 to 279 (SDASRKGLRR…AKKQVEKALE (69 aa)). Positions 211 to 279 (SDASRKGLRR…AKKQVEKALE (69 aa)) are two directly repeated 27 amino acid blocks separated by 15 amino acids. Residues 260–277 (LRRDLDASREAKKQVEKA) are compositionally biased toward basic and acidic residues. The hydrophilic stretch occupies residues 280-343 (EANSKLAALE…LRAGKASDSQ (64 aa)). D repeat units follow at residues 311–316 (AKLEAE), 317–322 (AKALKE), 325–330 (AKQAEE), and 332–337 (AKLRAG). The tract at residues 332–387 (AKLRAGKASDSQTPDAKPGNKVVPGKGQAPQAGTKPNQNKAPMKETKRQLPSTGET) is disordered. The LPXTG sorting signal signature appears at 381–385 (LPSTG). Position 384 is a pentaglycyl murein peptidoglycan amidated threonine (Thr384). Residues 385 to 415 (GETANPFFTAAALTVMATAGVAAVVKRKEEN) constitute a propeptide, removed by sortase.

It belongs to the M protein family.

Its subcellular location is the secreted. The protein localises to the cell wall. Its function is as follows. Mediates the attachment of S.pyogenes to skin epithelial cells through the binding of the human membrane cofactor protein CD46. Also binds to the factor H and factor H-like protein 1. These interactions could contribute to the fact that the M6 protein protects the bacterium from the phagocytosis by regulating the complement activation on the bacterial surface. The protein is M protein, serotype 6 (emm6) of Streptococcus pyogenes serotype M6 (strain ATCC BAA-946 / MGAS10394).